The chain runs to 454 residues: UPF0210 protein BL1209 (454 aa).

This sequence belongs to the UPF0210 family. As to quaternary structure, homodimer.

In Bifidobacterium longum (strain NCC 2705), this protein is UPF0210 protein BL1209.